We begin with the raw amino-acid sequence, 118 residues long: C-X-C motif chemokine 17 (118 aa).

Positions 1–22 (MKVLISSLLLLLPLMLMSVVSS) are cleaved as a signal peptide. 2 cysteine pairs are disulfide-bonded: cysteine 74–cysteine 102 and cysteine 76–cysteine 109.

The protein belongs to the intercrine alpha (chemokine CxC) family.

The protein resides in the secreted. Functionally, chemokine that acts as a chemoattractant for monocytes, macrophages and dendritic cells. Plays a role in angiogenesis and possibly in the development of tumors. Acts as an anti-inflammatory in the stomach. May play a role in the innate defense against infections. Activates the C-X-C chemokine receptor GPR35 to induce a rapid and transient rise in the level of intracellular calcium ions. This is C-X-C motif chemokine 17 (CXCL17) from Bos taurus (Bovine).